The primary structure comprises 83 residues: UPF0297 protein Moth_1643 (83 aa).

This sequence belongs to the UPF0297 family.

The sequence is that of UPF0297 protein Moth_1643 from Moorella thermoacetica (strain ATCC 39073 / JCM 9320).